Reading from the N-terminus, the 363-residue chain is DNA replication and repair protein RecF (363 aa).

Position 30-37 (30-37 (GINGSGKS)) interacts with ATP.

It belongs to the RecF family.

The protein localises to the cytoplasm. Its function is as follows. The RecF protein is involved in DNA metabolism; it is required for DNA replication and normal SOS inducibility. RecF binds preferentially to single-stranded, linear DNA. It also seems to bind ATP. This Pseudoalteromonas atlantica (strain T6c / ATCC BAA-1087) protein is DNA replication and repair protein RecF.